Reading from the N-terminus, the 253-residue chain is Nurim homolog (253 aa).

At 1–2 the chain is on the nuclear side; sequence MT. The helical transmembrane segment at 3-30 threads the bilayer; that stretch reads SIAKSIVLLASLATFAYSLYVVGSLMMF. The Perinuclear space portion of the chain corresponds to 31-56; it reads LSTPRSISKAHTWIFNLLDNKSRLQT. The chain crosses the membrane as a helical span at residues 57–78; sequence AYGPVVFDTLYLIGFIFQHSFL. The Nuclear portion of the chain corresponds to 79–96; that stretch reads KSAVVKKLLAKLGLSGAE. Residues 97–113 traverse the membrane as a helical segment; that stretch reads RTIYSLTSSLCLHYLIV. Residues 114–132 lie on the Perinuclear space side of the membrane; that stretch reads NWLPAQSIVLWQIDVEQSA. The chain crosses the membrane as a helical span at residues 133-161; that stretch reads PLWWTFVITHGICWVVIFGGSLVMDLPEL. Residues 162 to 188 are Nuclear-facing; sequence LGVKQAYYDLKAYGPPISYKSGELRNL. A helical transmembrane segment spans residues 189–207; it reads YAHVRHPSFVGLSVILFAT. Residues 208-213 are Perinuclear space-facing; the sequence is NVMSVD. The helical transmembrane segment at 214 to 231 threads the bilayer; it reads RLVMALLLTTYMYLAWST. Residues 232-253 are Nuclear-facing; that stretch reads DQKDVAYQKIQLQRKKLELKAK.

This sequence belongs to the nurim family.

Its subcellular location is the nucleus inner membrane. The chain is Nurim homolog (nrm) from Drosophila melanogaster (Fruit fly).